Reading from the N-terminus, the 226-residue chain is Deoxyribose-phosphate aldolase (226 aa).

The active-site Proton donor/acceptor is aspartate 96. The active-site Schiff-base intermediate with acetaldehyde is the lysine 157. Lysine 185 serves as the catalytic Proton donor/acceptor.

It belongs to the DeoC/FbaB aldolase family. DeoC type 1 subfamily.

The protein localises to the cytoplasm. The catalysed reaction is 2-deoxy-D-ribose 5-phosphate = D-glyceraldehyde 3-phosphate + acetaldehyde. It functions in the pathway carbohydrate degradation; 2-deoxy-D-ribose 1-phosphate degradation; D-glyceraldehyde 3-phosphate and acetaldehyde from 2-deoxy-alpha-D-ribose 1-phosphate: step 2/2. Catalyzes a reversible aldol reaction between acetaldehyde and D-glyceraldehyde 3-phosphate to generate 2-deoxy-D-ribose 5-phosphate. This is Deoxyribose-phosphate aldolase from Trichormus variabilis (strain ATCC 29413 / PCC 7937) (Anabaena variabilis).